We begin with the raw amino-acid sequence, 183 residues long: MQTKKNEIWVGIFLLAALLAALFVCLKAANVTSIRTEPTYTLYATFDNIGGLKARSPVSIGGVVVGRVADITLDPKTYLPRVTLEIEQRYNHIPDTSSLSIRTSGLLGEQYLALNVGFEDPELGTAILKDGDTIQDTKSAMVLEDLIGQFLYGSKGDDNKNSGDAPAAAPGNNETTEPVGTTK.

At 1–7 (MQTKKNE) the chain is on the cytoplasmic side. Residues 8 to 28 (IWVGIFLLAALLAALFVCLKA) form a helical; Signal-anchor for type II membrane protein membrane-spanning segment. Residues 29 to 183 (ANVTSIRTEP…ETTEPVGTTK (155 aa)) are Periplasmic-facing. Positions 39–116 (TYTLYATFDN…LGEQYLALNV (78 aa)) are MCE/MlaD. Residues 155 to 183 (KGDDNKNSGDAPAAAPGNNETTEPVGTTK) are disordered. The segment covering 172 to 183 (NNETTEPVGTTK) has biased composition (polar residues).

The protein belongs to the MlaD family. The complex is composed of two ATP-binding proteins (MlaF), two transmembrane proteins (MlaE), two cytoplasmic solute-binding proteins (MlaB) and six periplasmic solute-binding proteins (MlaD).

Its subcellular location is the cell inner membrane. In terms of biological role, part of the ABC transporter complex MlaFEDB, which is involved in a phospholipid transport pathway that maintains lipid asymmetry in the outer membrane by retrograde trafficking of phospholipids from the outer membrane to the inner membrane. MlaD functions in substrate binding with strong affinity for phospholipids and modulates ATP hydrolytic activity of the complex. The sequence is that of Intermembrane phospholipid transport system binding protein MlaD from Escherichia coli O157:H7.